Here is a 270-residue protein sequence, read N- to C-terminus: Putative envelope-preserving system protein Rv2743c (270 aa).

2 helical membrane-spanning segments follow: residues 50 to 72 (ALRW…ALLA) and 77 to 99 (FTSL…TLLL).

In terms of assembly, interacts with PspA and Rv2742c.

The protein resides in the membrane. Involved in preservation of envelope integrity and tolerance to surface stress. Reverses the inhibitory effect of PspA on ClgR activity. Facilitates intracellular growth of M.tuberculosis. The polypeptide is Putative envelope-preserving system protein Rv2743c (Mycobacterium tuberculosis (strain ATCC 25618 / H37Rv)).